The following is a 107-amino-acid chain: DNA-directed RNA polymerase subunit omega (107 aa).

It belongs to the RNA polymerase subunit omega family. The RNAP catalytic core consists of 2 alpha, 1 beta, 1 beta' and 1 omega subunit. When a sigma factor is associated with the core the holoenzyme is formed, which can initiate transcription.

It carries out the reaction RNA(n) + a ribonucleoside 5'-triphosphate = RNA(n+1) + diphosphate. In terms of biological role, promotes RNA polymerase assembly. Latches the N- and C-terminal regions of the beta' subunit thereby facilitating its interaction with the beta and alpha subunits. This Mycolicibacterium smegmatis (strain ATCC 700084 / mc(2)155) (Mycobacterium smegmatis) protein is DNA-directed RNA polymerase subunit omega.